The sequence spans 430 residues: UDP-N-acetylglucosamine 1-carboxyvinyltransferase (430 aa).

Position 22 to 23 (22 to 23 (KN)) interacts with phosphoenolpyruvate. Residue Arg102 participates in UDP-N-acetyl-alpha-D-glucosamine binding. Cys126 (proton donor) is an active-site residue. Cys126 is modified (2-(S-cysteinyl)pyruvic acid O-phosphothioketal). UDP-N-acetyl-alpha-D-glucosamine-binding positions include 131 to 135 (RPVDL), 172 to 175 (KVSV), Asp317, and Ile339.

This sequence belongs to the EPSP synthase family. MurA subfamily.

Its subcellular location is the cytoplasm. It catalyses the reaction phosphoenolpyruvate + UDP-N-acetyl-alpha-D-glucosamine = UDP-N-acetyl-3-O-(1-carboxyvinyl)-alpha-D-glucosamine + phosphate. The protein operates within cell wall biogenesis; peptidoglycan biosynthesis. Functionally, cell wall formation. Adds enolpyruvyl to UDP-N-acetylglucosamine. In Rhizobium johnstonii (strain DSM 114642 / LMG 32736 / 3841) (Rhizobium leguminosarum bv. viciae), this protein is UDP-N-acetylglucosamine 1-carboxyvinyltransferase.